The sequence spans 437 residues: Chromosomal replication initiator protein DnaA (437 aa).

The domain I, interacts with DnaA modulators stretch occupies residues 1–67 (MKNKIIASLK…KVVKDILGKD (67 aa)). The segment at 67 to 97 (DATYEITFKEIPYETKVESGPLIKKRPLLIT) is domain II. Residues 98 to 313 (PLNPKYTFEN…GAILRLIAYR (216 aa)) are domain III, AAA+ region. Positions 141, 143, 144, and 145 each coordinate ATP. The interval 314 to 437 (NLYGTLNLSI…SKGFAQGESM (124 aa)) is domain IV, binds dsDNA.

This sequence belongs to the DnaA family. As to quaternary structure, oligomerizes as a right-handed, spiral filament on DNA at oriC.

The protein resides in the cytoplasm. Plays an essential role in the initiation and regulation of chromosomal replication. ATP-DnaA binds to the origin of replication (oriC) to initiate formation of the DNA replication initiation complex once per cell cycle. Binds the DnaA box (a 9 base pair repeat at the origin) and separates the double-stranded (ds)DNA. Forms a right-handed helical filament on oriC DNA; dsDNA binds to the exterior of the filament while single-stranded (ss)DNA is stabiized in the filament's interior. The ATP-DnaA-oriC complex binds and stabilizes one strand of the AT-rich DNA unwinding element (DUE), permitting loading of DNA polymerase. After initiation quickly degrades to an ADP-DnaA complex that is not apt for DNA replication. Binds acidic phospholipids. This Thermosipho melanesiensis (strain DSM 12029 / CIP 104789 / BI429) protein is Chromosomal replication initiator protein DnaA.